A 572-amino-acid chain; its full sequence is Proline--tRNA ligase (572 aa).

Belongs to the class-II aminoacyl-tRNA synthetase family. ProS type 1 subfamily. Homodimer.

The protein resides in the cytoplasm. The catalysed reaction is tRNA(Pro) + L-proline + ATP = L-prolyl-tRNA(Pro) + AMP + diphosphate. In terms of biological role, catalyzes the attachment of proline to tRNA(Pro) in a two-step reaction: proline is first activated by ATP to form Pro-AMP and then transferred to the acceptor end of tRNA(Pro). As ProRS can inadvertently accommodate and process non-cognate amino acids such as alanine and cysteine, to avoid such errors it has two additional distinct editing activities against alanine. One activity is designated as 'pretransfer' editing and involves the tRNA(Pro)-independent hydrolysis of activated Ala-AMP. The other activity is designated 'posttransfer' editing and involves deacylation of mischarged Ala-tRNA(Pro). The misacylated Cys-tRNA(Pro) is not edited by ProRS. This Psychrobacter cryohalolentis (strain ATCC BAA-1226 / DSM 17306 / VKM B-2378 / K5) protein is Proline--tRNA ligase.